The following is a 107-amino-acid chain: Acidic phospholipase A2 braziliase-I (107 aa).

Cystine bridges form between Cys26-Cys100, Cys28-Cys44, Cys43-Cys86, Cys49-Cys107, Cys50-Cys79, Cys57-Cys72, and Cys66-Cys77. Tyr27, Gly29, and Gly31 together coordinate Ca(2+). His47 is an active-site residue. Residue Asp48 coordinates Ca(2+). Residue Asp80 is part of the active site.

As to quaternary structure, monomer. Ca(2+) serves as cofactor. Expressed by the venom gland.

Its subcellular location is the secreted. It catalyses the reaction a 1,2-diacyl-sn-glycero-3-phosphocholine + H2O = a 1-acyl-sn-glycero-3-phosphocholine + a fatty acid + H(+). Snake venom phospholipase A2 (PLA2) that induces significant edematogenic activity. Shows mild cytotoxicity on Trypanosoma cruzi and Leishmania infantum. Also inhibits ADP- and collagen-induced platelet aggregation. Does not show myotoxic activity. The chain is Acidic phospholipase A2 braziliase-I from Bothrops brazili (Brazil's lancehead).